Reading from the N-terminus, the 125-residue chain is Desulfoferrodoxin (125 aa).

Fe cation is bound by residues His49, His69, His75, Cys115, and His118.

Belongs to the desulfoferrodoxin family. It depends on Cu(2+) as a cofactor.

It catalyses the reaction reduced [rubredoxin] + superoxide + 2 H(+) = oxidized [rubredoxin] + H2O2. Catalyzes the reduction of superoxide to hydrogen peroxide, using electrons from NADH and NADH:rubredoxin oxidoreductase (NROR) and rubredoxin (Rd) as electron transport intermediaries between NADH and Dfx. Is a key factor in the superoxide reductase dependent part of a pathway for detoxification of reactive oxygen species (ROS) in C.acetobutylicum, an obligate anaerobic bacterium. The chain is Desulfoferrodoxin (dfx) from Clostridium acetobutylicum (strain ATCC 824 / DSM 792 / JCM 1419 / IAM 19013 / LMG 5710 / NBRC 13948 / NRRL B-527 / VKM B-1787 / 2291 / W).